The following is a 72-amino-acid chain: Galensin (72 aa).

The signal sequence occupies residues 1–22 (MLTLKKSMLLLFFLGLVSVSLA). The propeptide occupies 23–48 (DDKREDEAEEGEDKRAAEEERNVEKR). The residue at position 71 (Phe-71) is a Phenylalanine amide.

The protein belongs to the frog skin active peptide (FSAP) family. Brevinin subfamily. In terms of assembly, homodimer; disulfide-linked. Expressed by the skin glands.

It localises to the secreted. Antibacterial activity against the Gram-positive bacterium M.luteus and the Gram-negative bacterium E.coli. The chain is Galensin from Kassina senegalensis (Senegal running frog).